The chain runs to 141 residues: Envelope glycoprotein L (141 aa).

The first 19 residues, 1–19 (MKWLLGAYVCLCLANILNA), serve as a signal peptide directing secretion. The tract at residues 21-131 (IPNPCCNVFA…TSAIKFKSKY (111 aa)) is interaction with gH.

Belongs to the herpesviridae glycoprotein L family. As to quaternary structure, interacts with glycoprotein H (gH); this interaction is necessary for the correct processing and cell surface expression of gH. The heterodimer gH/gL seems to interact with gB trimers during fusion.

It is found in the virion membrane. It localises to the host cell membrane. The protein resides in the host Golgi apparatus. Its subcellular location is the host trans-Golgi network. Its function is as follows. The heterodimer glycoprotein H-glycoprotein L is required for the fusion of viral and plasma membranes leading to virus entry into the host cell. Acts as a functional inhibitor of gH and maintains gH in an inhibited form. Upon binding to host integrins, gL dissociates from gH leading to activation of the viral fusion glycoproteins gB and gH. The protein is Envelope glycoprotein L of Saimiriine herpesvirus 2 (strain 11) (SaHV-2).